We begin with the raw amino-acid sequence, 432 residues long: Glutamate-1-semialdehyde 2,1-aminomutase 2 (432 aa).

At lysine 268 the chain carries N6-(pyridoxal phosphate)lysine.

The protein belongs to the class-III pyridoxal-phosphate-dependent aminotransferase family. HemL subfamily. In terms of assembly, homodimer. Requires pyridoxal 5'-phosphate as cofactor.

Its subcellular location is the cytoplasm. The catalysed reaction is (S)-4-amino-5-oxopentanoate = 5-aminolevulinate. The protein operates within porphyrin-containing compound metabolism; protoporphyrin-IX biosynthesis; 5-aminolevulinate from L-glutamyl-tRNA(Glu): step 2/2. The chain is Glutamate-1-semialdehyde 2,1-aminomutase 2 from Listeria welshimeri serovar 6b (strain ATCC 35897 / DSM 20650 / CCUG 15529 / CIP 8149 / NCTC 11857 / SLCC 5334 / V8).